The chain runs to 373 residues: XK-related protein 9 (373 aa).

8 helical membrane passes run 8–28 (FMMS…DIWV), 38–58 (YVFS…AQCF), 166–186 (AAIM…QVAL), 203–223 (ITYL…VVLL), 224–244 (LFLN…LGII), 256–276 (CISM…FTFF), 295–315 (VLGT…IFNP), and 318–338 (FIPI…FLIV).

The protein belongs to the XK family. In terms of processing, undergoes proteolytic processing by caspase-3 (CASP3), caspase-6 (CASP6) and caspase-7 (CASP7) to generate the XK-related protein 9, processed form, leading to its activation.

Its subcellular location is the cell membrane. It catalyses the reaction a 1,2-diacyl-sn-glycero-3-phospho-L-serine(in) = a 1,2-diacyl-sn-glycero-3-phospho-L-serine(out). Its activity is regulated as follows. Activated upon caspase cleavage to generate the XK-related protein 9, processed form. Does not act prior the onset of apoptosis. Functionally, phospholipid scramblase that promotes phosphatidylserine exposure on apoptotic cell surface. Phosphatidylserine is a specific marker only present at the surface of apoptotic cells and acts as a specific signal for engulfment. This chain is XK-related protein 9, found in Pan troglodytes (Chimpanzee).